The primary structure comprises 145 residues: Large ribosomal subunit protein bL17 (145 aa).

Belongs to the bacterial ribosomal protein bL17 family. In terms of assembly, part of the 50S ribosomal subunit. Contacts protein L32.

In Francisella tularensis subsp. tularensis (strain FSC 198), this protein is Large ribosomal subunit protein bL17.